The primary structure comprises 379 residues: Protein-glutamate methylesterase/protein-glutamine glutaminase (379 aa).

The Response regulatory domain occupies 4–121 (KVLVVDDSSF…AKNSDEAGSL (118 aa)). A 4-aspartylphosphate modification is found at D55. One can recognise a CheB-type methylesterase domain in the interval 185–379 (SGKEYKLLAI…ASMVKEISRG (195 aa)). Catalysis depends on residues S197, H224, and D321.

It belongs to the CheB family. In terms of processing, phosphorylated by CheA. Phosphorylation of the N-terminal regulatory domain activates the methylesterase activity.

The protein resides in the cytoplasm. It carries out the reaction [protein]-L-glutamate 5-O-methyl ester + H2O = L-glutamyl-[protein] + methanol + H(+). The enzyme catalyses L-glutaminyl-[protein] + H2O = L-glutamyl-[protein] + NH4(+). Involved in chemotaxis. Part of a chemotaxis signal transduction system that modulates chemotaxis in response to various stimuli. Catalyzes the demethylation of specific methylglutamate residues introduced into the chemoreceptors (methyl-accepting chemotaxis proteins or MCP) by CheR. Also mediates the irreversible deamidation of specific glutamine residues to glutamic acid. This Colwellia psychrerythraea (strain 34H / ATCC BAA-681) (Vibrio psychroerythus) protein is Protein-glutamate methylesterase/protein-glutamine glutaminase.